A 440-amino-acid polypeptide reads, in one-letter code: Ribosomal protein uS12 methylthiotransferase RimO (440 aa).

An MTTase N-terminal domain is found at P6–P116. 6 residues coordinate [4Fe-4S] cluster: C15, C51, C80, C149, C153, and C156. Positions L135–A373 constitute a Radical SAM core domain. The region spanning Q376–V440 is the TRAM domain.

It belongs to the methylthiotransferase family. RimO subfamily. [4Fe-4S] cluster is required as a cofactor.

The protein resides in the cytoplasm. The enzyme catalyses L-aspartate(89)-[ribosomal protein uS12]-hydrogen + (sulfur carrier)-SH + AH2 + 2 S-adenosyl-L-methionine = 3-methylsulfanyl-L-aspartate(89)-[ribosomal protein uS12]-hydrogen + (sulfur carrier)-H + 5'-deoxyadenosine + L-methionine + A + S-adenosyl-L-homocysteine + 2 H(+). Its function is as follows. Catalyzes the methylthiolation of an aspartic acid residue of ribosomal protein uS12. The sequence is that of Ribosomal protein uS12 methylthiotransferase RimO from Pseudomonas aeruginosa (strain UCBPP-PA14).